A 283-amino-acid polypeptide reads, in one-letter code: uncharacterized protein (283 aa).

Residues 1–10 are compositionally biased toward polar residues; it reads MELNKTSESL. 2 disordered regions span residues 1-99 and 255-283; these read MELN…NPTS and DQEGDQEGEGRQDQHQGQHQEKKVEEAHI. 3 stretches are compositionally biased toward basic and acidic residues: residues 14–34, 42–53, and 61–71; these read KIDHNHPRTEAHEPRDQREVR, SSTRQEKADRMP, and ESSKGSEEGAV.

The protein belongs to the chlamydial CPn_0705/CT_671/TC_0042 family.

This is an uncharacterized protein from Chlamydia trachomatis serovar D (strain ATCC VR-885 / DSM 19411 / UW-3/Cx).